Consider the following 365-residue polypeptide: Aminomethyltransferase (365 aa).

This sequence belongs to the GcvT family. In terms of assembly, the glycine cleavage system is composed of four proteins: P, T, L and H.

The catalysed reaction is N(6)-[(R)-S(8)-aminomethyldihydrolipoyl]-L-lysyl-[protein] + (6S)-5,6,7,8-tetrahydrofolate = N(6)-[(R)-dihydrolipoyl]-L-lysyl-[protein] + (6R)-5,10-methylene-5,6,7,8-tetrahydrofolate + NH4(+). Functionally, the glycine cleavage system catalyzes the degradation of glycine. This Chlorobaculum parvum (strain DSM 263 / NCIMB 8327) (Chlorobium vibrioforme subsp. thiosulfatophilum) protein is Aminomethyltransferase.